A 155-amino-acid polypeptide reads, in one-letter code: Ribosomal RNA large subunit methyltransferase H (155 aa).

S-adenosyl-L-methionine is bound by residues L72, G103, and 122 to 127 (LSDLTL).

It belongs to the RNA methyltransferase RlmH family. Homodimer.

Its subcellular location is the cytoplasm. It catalyses the reaction pseudouridine(1915) in 23S rRNA + S-adenosyl-L-methionine = N(3)-methylpseudouridine(1915) in 23S rRNA + S-adenosyl-L-homocysteine + H(+). Its function is as follows. Specifically methylates the pseudouridine at position 1915 (m3Psi1915) in 23S rRNA. The polypeptide is Ribosomal RNA large subunit methyltransferase H (Verminephrobacter eiseniae (strain EF01-2)).